Reading from the N-terminus, the 45-residue chain is Myotoxin-2 (45 aa).

Intrachain disulfides connect cysteine 4-cysteine 36, cysteine 11-cysteine 30, and cysteine 18-cysteine 37.

This sequence belongs to the crotamine-myotoxin family. In terms of assembly, monomer. Expressed by the venom gland.

It is found in the secreted. Its function is as follows. Cationic peptide that possesses multiple functions. It acts as a cell-penetrating peptide (CPP), and as a potent voltage-gated potassium channel (Kv) inhibitor. It exhibits antimicrobial activities, hind limb paralysis, and severe muscle necrosis by a non-enzymatic mechanism. The chain is Myotoxin-2 from Crotalus viridis viridis (Prairie rattlesnake).